The sequence spans 1464 residues: Glutamate receptor ionotropic, NMDA 2A (1464 aa).

The signal sequence occupies residues 1 to 22; it reads MGRVGYWTLLVLPALLVWRGPA. The Extracellular portion of the chain corresponds to 23-556; sequence PSAAAEKGPP…SAFLEPFSAS (534 aa). Histidine 44 lines the Zn(2+) pocket. Residue asparagine 75 is glycosylated (N-linked (GlcNAc...) asparagine). Cysteine 87 and cysteine 320 form a disulfide bridge. Residues histidine 128, glutamate 266, and aspartate 282 each coordinate Zn(2+). N-linked (GlcNAc...) asparagine glycosylation is found at asparagine 340, asparagine 380, asparagine 443, and asparagine 444. 2 disulfides stabilise this stretch: cysteine 429-cysteine 455 and cysteine 436-cysteine 456. Residues serine 511, threonine 513, and arginine 518 each coordinate L-glutamate. The N-linked (GlcNAc...) asparagine glycan is linked to asparagine 541. The helical transmembrane segment at 557 to 576 threads the bilayer; that stretch reads VWVMMFVMLLIVSAIAVFVF. The Cytoplasmic portion of the chain corresponds to 577 to 600; it reads EYFSPVGYNRNLAKGKAPHGPSFT. A pore-forming region spans residues 599–620; it reads FTIGKAIWLLWGLVFNNSVPVQ. The segment at residues 601 to 615 is an intramembrane region (discontinuously helical); the sequence is IGKAIWLLWGLVFNN. Residues 616 to 625 lie on the Cytoplasmic side of the membrane; the sequence is SVPVQNPKGT. The chain crosses the membrane as a helical span at residues 626 to 646; the sequence is TSKIMVSVWAFFAVIFLASYT. Residues 647–814 are Extracellular-facing; the sequence is ANLAAFMIQE…NEVMSSQLDI (168 aa). Asparagine 687 is a glycosylation site (N-linked (GlcNAc...) asparagine). L-glutamate-binding residues include serine 689, threonine 690, and aspartate 731. Residues cysteine 745 and cysteine 800 are joined by a disulfide bond. A helical transmembrane segment spans residues 815–835; sequence DNMAGVFYMLAAAMALSLITF. The Cytoplasmic segment spans residues 836-1464; that stretch reads IWEHLFYWKL…KKMPSIESDV (629 aa). Residues serine 882, serine 890, and serine 929 each carry the phosphoserine modification. Polar residues-rich tracts occupy residues 997–1010 and 1023–1032; these read EVAVSTESKANSRP and QDSLSQNPVS. The disordered stretch occupies residues 997-1083; the sequence is EVAVSTESKA…PDNSKNHKTK (87 aa). Serine 1025 is subject to Phosphoserine. Composition is skewed to basic and acidic residues over residues 1033 to 1043 and 1052 to 1061; these read QRDEATAENRT and LPEEMAHSDI. Serine 1059 and serine 1062 each carry phosphoserine. A compositionally biased stretch (basic and acidic residues) spans 1070–1083; it reads CHREPDNSKNHKTK. Residues serine 1198 and serine 1291 each carry the phosphoserine modification. Positions 1335 to 1372 are disordered; that stretch reads KLSGKKSSLFPQGLEDSKRSKSLLPDHTSDNPFLHSHR. A PDZ-binding motif is present at residues 1462-1464; that stretch reads SDV.

Belongs to the glutamate-gated ion channel (TC 1.A.10.1) family. NR2A/GRIN2A subfamily. In terms of assembly, heterotetramer. Forms heterotetrameric channels composed of two GluN1/zeta subunits (GRIN1), and two identical GluN2/epsilon subunits (GRIN2A, GRIN2B, GRIN2C or GRIN2D) or GluN3 subunits (GRIN3A or GRIN3B) (in vitro). Can also form heterotetrameric channels that contain at least two GluN1 subunits and at least two different GluN2 subunits (or a combination of one GluN2 and one GluN3 subunits) (in vitro). In vivo, the subunit composition may depend on the expression levels of the different subunits. Found in a complex with GRIN1, GRIN3A and PPP2CB. Found in a complex with GRIN1 and GRIN3B. Interacts with AIP1. Interacts with HIP1 and NETO1. Interacts with SNX27 (via PDZ domain); the interaction is required for recycling to the plasma membrane when endocytosed and prevent degradation in lysosomes. Interacts with PDZ domains of PATJ and DLG4. Interacts with LRFN2. Interacts with RPH3A and DLG4; this ternary complex regulates NMDA receptor composition at postsynaptic membranes. Interacts with SORCS2. Interacts with ARC; preventing ARC oligomerization. Interacts (via the extreme C-terminus) with FRMPD2 (the second PDZ domain); the interaction is direct and is likely to promote NMDAR-mediated neural signal transmission. GRIN2A binds FRMPD2 with lower affinity than GRIN2B.

Its subcellular location is the cell projection. The protein localises to the dendritic spine. It localises to the cell membrane. The protein resides in the synapse. It is found in the postsynaptic cell membrane. Its subcellular location is the cytoplasmic vesicle membrane. The enzyme catalyses Ca(2+)(in) = Ca(2+)(out). It carries out the reaction Na(+)(in) = Na(+)(out). The catalysed reaction is K(+)(in) = K(+)(out). NMDA glutamate receptor activity is inhibited by endogenous Mg(2+) in a voltage-dependent manner. NMDA glutamate receptor activity is inhibited by endogenous Zn(2+). NMDA glutamate receptor activity is inhibited by endogenous protons. In terms of biological role, component of N-methyl-D-aspartate (NMDA) receptors (NMDARs) that function as heterotetrameric, ligand-gated cation channels with high calcium permeability and voltage-dependent block by Mg(2+). NMDARs participate in synaptic plasticity for learning and memory formation by contributing to the slow phase of excitatory postsynaptic current, long-term synaptic potentiation, and learning. Channel activation requires binding of the neurotransmitter L-glutamate to the GluN2 subunit, glycine or D-serine binding to the GluN1 subunit, plus membrane depolarization to eliminate channel inhibition by Mg(2+). NMDARs mediate simultaneously the potasium efflux and the influx of calcium and sodium. Each GluN2 subunit confers differential attributes to channel properties, including activation, deactivation and desensitization kinetics, pH sensitivity, Ca2(+) permeability, and binding to allosteric modulators. Participates in the synaptic plasticity regulation through activation by the L-glutamate releaseed by BEST1, into the synaptic cleft, upon F2R/PAR-1 activation in astrocyte. The polypeptide is Glutamate receptor ionotropic, NMDA 2A (Homo sapiens (Human)).